A 640-amino-acid chain; its full sequence is EF-hand domain-containing protein 1 (640 aa).

The interval 1 to 45 is required for its localization in the mitotic spindle and interaction with alpha-tubulin; that stretch reads MVSNPVHGLPFLPGTSFKDSTKTAFHRSQTLSYRNGYAIVRRPTV. DM10 domains are found at residues 93–198, 239–359, and 416–520; these read DKKV…ESQG, DKQV…KEKF, and DNKV…ESNA. The interval 535-554 is disordered; sequence VRKREAPAPEAESKQTEKDP. A compositionally biased stretch (basic and acidic residues) spans 538 to 554; sequence REAPAPEAESKQTEKDP. One can recognise an EF-hand domain in the interval 574-609; that stretch reads SCKDNIREAFQIYDKEASGYVDRDMFFKICESLNVP.

As to quaternary structure, microtubule inner protein component of sperm flagellar doublet microtubules. Interacts with the C-terminus of CACNA1E. Interacts with alpha-tubulin. As to expression, widely expressed. Not detected in lymphocytes.

Its subcellular location is the cytoplasm. It localises to the cytoskeleton. The protein resides in the cilium axoneme. It is found in the flagellum axoneme. The protein localises to the microtubule organizing center. Its subcellular location is the centrosome. It localises to the spindle. The protein resides in the spindle pole. Microtubule inner protein (MIP) part of the dynein-decorated doublet microtubules (DMTs) in cilia axoneme, which is required for motile cilia beating. Microtubule-associated protein which regulates cell division and neuronal migration during cortical development. Necessary for radial and tangential cell migration during brain development, possibly acting as a regulator of cell morphology and process formation during migration. May enhance calcium influx through CACNA1E and stimulate programmed cell death. This Homo sapiens (Human) protein is EF-hand domain-containing protein 1.